The chain runs to 239 residues: Small ribosomal subunit protein uS2 (239 aa).

This sequence belongs to the universal ribosomal protein uS2 family.

This Francisella philomiragia subsp. philomiragia (strain ATCC 25017 / CCUG 19701 / FSC 153 / O#319-036) protein is Small ribosomal subunit protein uS2.